We begin with the raw amino-acid sequence, 551 residues long: uncharacterized protein (551 aa).

Residues 1–7 (MKKNSSV) lie on the Cytoplasmic side of the membrane. Residues 8-28 (VFFLVGLSQFVTMAFLIIGSI) form a helical membrane-spanning segment. At 29 to 88 (TAPIFKQIGYSKYDEITYGTFGYCKEGSCSKASYNYHPDELSDSDSNWKLNSNARSILGK) the chain is on the vacuolar side. A helical transmembrane segment spans residues 89-109 (IIFITPIAAGLNFLGFLCTIM). Residues 110–135 (SVLLINVLSSDRVGSASAIMFFVNLT) are Cytoplasmic-facing. Residues 136 to 156 (FSTLGFLSASLICIVVFLLFY) traverse the membrane as a helical segment. At 157 to 160 (PHVT) the chain is on the vacuolar side. The chain crosses the membrane as a helical span at residues 161-181 (WCSWVLIPGAALSLLVIPLIF). The Cytoplasmic portion of the chain corresponds to 182-551 (SAYSRSSGSR…TSLNNPYGFR (370 aa)). A phosphoserine mark is found at serine 224 and serine 232. Residues 280–341 (AKDMENSNGS…NGSNTSNNIN (62 aa)) form a disordered region. The segment covering 307–320 (TSTYSVIESESGLK) has biased composition (polar residues). The span at 321 to 341 (NGSVSNNYVRNNGSNTSNNIN) shows a compositional bias: low complexity. Residue serine 363 is modified to Phosphoserine.

Forms homo dimers or homooligomers in MCC microdomains. Interacts with BOI2 and RHO3, two key regulators of secretion.

The protein resides in the vacuole membrane. It localises to the cell membrane. In terms of biological role, protein involved in secretion and cell wall organization. Contributes to cell surface-related functions as a auxiliary component of MCC/eisosome that specifically interacts with the secretory pathway. This is an uncharacterized protein from Saccharomyces cerevisiae (strain ATCC 204508 / S288c) (Baker's yeast).